Reading from the N-terminus, the 892-residue chain is MPPAIARFVAIAAVLLCGHVAVAAESGGVGGGSARRVLHQPLFPIEWTPPPSPPPPPAPDFTSDPSTPPAPDAPSGDFFPPAPPTTTTPTSPGTTPSPTTVAADVSKTPSGSGSGHHGGGPTKATIVAAGAGAAAAVALLGFACAFLITGRARRRGDSQKLLGPDRAGAHRSAATSAADFLYVGTVEPTTPARHHGPTTADLVGSPYRKLRSERARRGVSRDEDADHPSPELRPLPPLRRAATLGSSDEDGYYTPRQLSGGSGGGGAAEAWSSASASSPPTTTTASRRSLPSMTSDFFPPVAAIAAPPAPPPARSRRTPPRTRFSTGSTPDTKQVTSPSPRPVQPSNAPPPPPPPPPPPPPPPPPKLNTAPKPPPPPPPPPSVPSNNNLPKPAEPPAVPTSRRRLLKPLPPEGPRIAMPMPITAATTVDNNGSTSMREGDNAAADDGGSGEPRPKLKPLHWDKVRATSDRAMVWDQLKSSSFQLDEDMIEALFMNNSTPAAPPREVGRKAAGVPSFRQEERVLDPKKAQNIAILLRALNVTREEVSDALLDGNAECLGSELLETLVKMAPTKEEELKLRDYSGDLSKLGSAERFLKAVLDIPFAFKRVDAMLYRANFETEINYLRNSFETLEAACEDLRGSRLFLKLLEAVLRTGNRMNVGTNRGEAKAFKLDTLLKLADVKGTDGKTTLLHFVVQEIIRSEDAKSEKESAMISSSKDDRKHGLKVVSGLSSELGNVKKAATMDFDVLHGYVNKLETGLEKIKSVLQLEKKCTQGQRFFMSMQDFLKEAEREIERVRGEERRALGRVKDITEYFHGDTAKEEAHPLRIFMVVRDFLSTLDQVCREVGRMQQDRTVIGGSARSFRISATSSLPVLSLYGQRRENNSDDDSSSS.

The N-terminal stretch at Met-1–Ala-23 is a signal peptide. The disordered stretch occupies residues Phe-43–Gly-119. Residues Trp-47–Pro-59 show a composition bias toward pro residues. A compositionally biased stretch (low complexity) spans Thr-87–Gly-111. A helical membrane pass occupies residues Ile-126–Phe-146. The disordered stretch occupies residues Pro-188–Lys-457. The span at Leu-210 to Pro-230 shows a compositional bias: basic and acidic residues. 3 stretches are compositionally biased toward low complexity: residues Ala-268 to Ser-286, Phe-297 to Ala-306, and Arg-321 to Pro-330. A compositionally biased stretch (pro residues) spans Ser-339–Val-383. Residues Ala-424 to Met-436 are compositionally biased toward polar residues. Residues Asp-446–Ala-867 form the FH2 domain.

The protein belongs to the formin-like family. Class-I subfamily.

It is found in the membrane. This is Formin-like protein 8 (FH8) from Oryza sativa subsp. japonica (Rice).